Here is a 303-residue protein sequence, read N- to C-terminus: Cytosolic-abundant heat soluble protein 3 (303 aa).

Low complexity predominate over residues 1–19 (MSSRQNQQSSSQHSSSSQQ). The segment at 1–67 (MSSRQNQQSS…PGSHSEVHEE (67 aa)) is disordered. A coiled-coil region spans residues 170–257 (ARQDEQDAGM…ESAKAQTNVN (88 aa)). CAHS motif regions lie at residues 184–202 (YREEVERDAELIRQILERQ) and 221–239 (QEREIQLEAEYAMRALELE). The span at 270–280 (KGAIQTSADKS) shows a compositional bias: polar residues. Residues 270-303 (KGAIQTSADKSSTTKTGPTTVTQIKHTEQHTERR) are disordered. Low complexity predominate over residues 282-291 (TTKTGPTTVT). A compositionally biased stretch (basic and acidic residues) spans 294 to 303 (KHTEQHTERR).

Belongs to the Cytosolic-abundant heat soluble protein (CAHS) family.

The protein resides in the cytoplasm. In terms of biological role, CAHS proteins are cytosolic heat soluble proteins that seem to contribute to the anhydrobiosis in tardigrades, but their specific mechanisms are yet to be identified. It is possible that protection during anhydrobiosis might occur via the stabilization of vitrifying small molecules such as sugars, but not via the direct glass transition of CAHS proteins themselves. The sequence is that of Cytosolic-abundant heat soluble protein 3 from Ramazzottius varieornatus (Water bear).